We begin with the raw amino-acid sequence, 167 residues long: Translationally-controlled tumor protein homolog (167 aa).

One can recognise a TCTP domain in the interval 1 to 167 (MLIYQDVLTG…WKDGLKEIKI (167 aa)).

The protein belongs to the TCTP family.

It localises to the cytoplasm. The protein localises to the cytoskeleton. In terms of biological role, involved in protein synthesis. Involved in microtubule stabilization. The protein is Translationally-controlled tumor protein homolog of Cryptococcus neoformans var. neoformans serotype D (strain B-3501A) (Filobasidiella neoformans).